Reading from the N-terminus, the 169-residue chain is Peptide deformylase (169 aa).

Fe cation contacts are provided by C91 and H133. The active site involves E134. H137 provides a ligand contact to Fe cation.

This sequence belongs to the polypeptide deformylase family. Fe(2+) serves as cofactor.

It carries out the reaction N-terminal N-formyl-L-methionyl-[peptide] + H2O = N-terminal L-methionyl-[peptide] + formate. Removes the formyl group from the N-terminal Met of newly synthesized proteins. Requires at least a dipeptide for an efficient rate of reaction. N-terminal L-methionine is a prerequisite for activity but the enzyme has broad specificity at other positions. This chain is Peptide deformylase, found in Klebsiella pneumoniae subsp. pneumoniae (strain ATCC 700721 / MGH 78578).